We begin with the raw amino-acid sequence, 250 residues long: Maleate isomerase (250 aa).

Residues Asn15, 80–82, Tyr137, and Asn167 each bind substrate; that span reads CLV. Cys80 acts as the Nucleophile in catalysis. Cys80 carries the S-(2-succinyl)cysteine modification. Catalysis depends on Cys198, which acts as the Proton donor. Residue 199–200 participates in substrate binding; it reads VQ.

The protein belongs to the maleate isomerase family. As to quaternary structure, homodimer.

The catalysed reaction is maleate = fumarate. It functions in the pathway cofactor degradation; nicotinate degradation. Functionally, catalyzes cis-trans isomerization of the C2-C3 double bond in maleate to yield fumarate in the aerobic nicotinate degradation pathway. The chain is Maleate isomerase from Pseudomonas putida (strain ATCC 47054 / DSM 6125 / CFBP 8728 / NCIMB 11950 / KT2440).